The sequence spans 1083 residues: Glutamate receptor-interacting protein 2 (1083 aa).

PDZ domains are found at residues 58–141, 156–244, and 258–342; these read IVEL…EYEL, TIEI…EYDV, and LVEI…LPAH. A compositionally biased stretch (polar residues) spans 408–422; it reads AGTPGFSSQNSNTLP. Residues 408–460 are disordered; the sequence is AGTPGFSSQNSNTLPRTVHPMSPRTTMNRRRQKRKDHKSSLSLASSTVGPGGQ. Positions 434–444 are enriched in basic residues; the sequence is MNRRRQKRKDH. PDZ domains follow at residues 468-555, 569-652, and 667-749; these read EIIL…EIEF, HVKL…RKDE, and TVEL…KKQT. Disordered regions lie at residues 754–783, 853–872, and 936–965; these read PQRL…LSEI, NEQD…GLET, and GSHH…VHNA. A compositionally biased stretch (polar residues) spans 774-783; the sequence is SQKTSKLSEI. Positions 945–963 are enriched in basic and acidic residues; that stretch reads PKKENKLSQDARSKKEEVH. The region spanning 974 to 1056 is the PDZ 7 domain; the sequence is KVTVQKDMDT…RLDLVISRGL (83 aa).

It belongs to the GRIP2 family. In terms of tissue distribution, enriched in the mitochondrial cloud of stage I oocytes, before becoming concentrated at the tip of the vegetal cortex in stage II oocytes. Expression becomes localized to the germ plasm of stage III-IV oocytes and early cleavage stages. At the tailbud stage, localizes to the migrating primordial germ cells (PGCs) until PGC migration is complete (stage 40), at which point expression disappears. In the adult, expressed in the brain, ovary, eye, muscle, spinal cord and very weakly in adipocytes.

It is found in the cytoplasm. In terms of biological role, plays an important role in primordial germ cell (PGC) maintenance and efficiency of PGC migration. This Xenopus laevis (African clawed frog) protein is Glutamate receptor-interacting protein 2.